Here is an 88-residue protein sequence, read N- to C-terminus: Small ribosomal subunit protein bS20 (88 aa).

The segment at Met1–Ser26 is disordered. Over residues Ala7 to Gln19 the composition is skewed to basic residues.

It belongs to the bacterial ribosomal protein bS20 family.

Its function is as follows. Binds directly to 16S ribosomal RNA. The polypeptide is Small ribosomal subunit protein bS20 (Psychrobacter cryohalolentis (strain ATCC BAA-1226 / DSM 17306 / VKM B-2378 / K5)).